Consider the following 634-residue polypeptide: MISLKFPNNEVREFPENITALEVAKTLSPRLAKEALCASINGKLIDLSQKISESGEFRLYTFEDDEGKDVFRHSSAHLMAQAVKRLFPKTKLAIGPAIKDGFYYDFDPEESFSPEDLEKIEAEMEKIVKEDLPIERFVLSRDEAIKFFEEKGEIYKVELVKDIPEGVEISFYRQGEFVDLCTGPHVPSTGYLKAFKLLNIAGAYWRGNEKNKMLQRIYGVSFPKKSMLTDYLNFLEEAKKRDHRKIGQELDLFSLQEEGPGFPFFHPKGMVIRNELENFWREKHRLAGYQEIKTPIILNRELWERSGHWAHYKENMYFTKIDDQDYAIKPMNCPGSILVYKNKLHSYREFPIRLAELGLVHRHELSGVLHGLMRVRCFTQDDAHIFMLPEQVKDEIIGVINLIDEFYRLFGFEYHVELSTRPENSMGSDELWELATNSLKEALEERGLPYKINEGDGAFYGPKIDFHLKDCLGRTWQCGTIQLDFQMPEKFDLTYIGEDGQKHRPVMIHRVVFGSIERFIGILIEHYAGAFPVWLSPVQVRVITVAERHREYGQEIYQKLFNQGVRVELDDRNETIGYKIREGQMQKIPYLLIVGDKEIEQGSVAVRKRGVGDLGQKPFAEFIEELLAEIREKR.

Positions 1–61 constitute a TGS domain; that stretch reads MISLKFPNNE…SESGEFRLYT (61 aa). Residues 242–532 are catalytic; it reads DHRKIGQELD…LIEHYAGAFP (291 aa). Zn(2+)-binding residues include C333, H384, and H509.

Belongs to the class-II aminoacyl-tRNA synthetase family. As to quaternary structure, homodimer. Zn(2+) is required as a cofactor.

It is found in the cytoplasm. It carries out the reaction tRNA(Thr) + L-threonine + ATP = L-threonyl-tRNA(Thr) + AMP + diphosphate + H(+). Its function is as follows. Catalyzes the attachment of threonine to tRNA(Thr) in a two-step reaction: L-threonine is first activated by ATP to form Thr-AMP and then transferred to the acceptor end of tRNA(Thr). Also edits incorrectly charged L-seryl-tRNA(Thr). In Carboxydothermus hydrogenoformans (strain ATCC BAA-161 / DSM 6008 / Z-2901), this protein is Threonine--tRNA ligase.